We begin with the raw amino-acid sequence, 94 residues long: Pyrimidine/purine nucleoside phosphorylase (94 aa).

The protein belongs to the nucleoside phosphorylase PpnP family.

The catalysed reaction is a purine D-ribonucleoside + phosphate = a purine nucleobase + alpha-D-ribose 1-phosphate. It catalyses the reaction adenosine + phosphate = alpha-D-ribose 1-phosphate + adenine. It carries out the reaction cytidine + phosphate = cytosine + alpha-D-ribose 1-phosphate. The enzyme catalyses guanosine + phosphate = alpha-D-ribose 1-phosphate + guanine. The catalysed reaction is inosine + phosphate = alpha-D-ribose 1-phosphate + hypoxanthine. It catalyses the reaction thymidine + phosphate = 2-deoxy-alpha-D-ribose 1-phosphate + thymine. It carries out the reaction uridine + phosphate = alpha-D-ribose 1-phosphate + uracil. The enzyme catalyses xanthosine + phosphate = alpha-D-ribose 1-phosphate + xanthine. In terms of biological role, catalyzes the phosphorolysis of diverse nucleosides, yielding D-ribose 1-phosphate and the respective free bases. Can use uridine, adenosine, guanosine, cytidine, thymidine, inosine and xanthosine as substrates. Also catalyzes the reverse reactions. This Pseudomonas fluorescens (strain Pf0-1) protein is Pyrimidine/purine nucleoside phosphorylase.